The chain runs to 297 residues: Thiosulfate sulfurtransferase (297 aa).

Position 14 is an N6-acetyllysine; alternate (K14). The residue at position 14 (K14) is an N6-succinyllysine; alternate. Positions 25-143 (VGPGLRVLDA…WLKEGHPVTS (119 aa)) constitute a Rhodanese 1 domain. A glycan (O-linked (GlcNAc) serine) is linked at S35. S38 is modified (phosphoserine). The residue at position 136 (K136) is an N6-acetyllysine; alternate. K136 is modified (N6-succinyllysine; alternate). Positions 144-159 (EPSRPEPAIFKATLNR) are hinge. K163 is subject to N6-acetyllysine. Residues 173–288 (ESKRFQLVDS…WFHRAPPETW (116 aa)) form the Rhodanese 2 domain. K175 is modified (N6-acetyllysine; alternate). K175 bears the N6-succinyllysine; alternate mark. R187 provides a ligand contact to substrate. K224 is modified (N6-acetyllysine; alternate). The residue at position 224 (K224) is an N6-succinyllysine; alternate. K236 is subject to N6-acetyllysine. K237 carries the N6-acetyllysine; alternate modification. K237 is subject to N6-succinyllysine; alternate. C248 acts as the Cysteine persulfide intermediate in catalysis. K250 provides a ligand contact to substrate.

As to quaternary structure, monomer. In terms of tissue distribution, expressed in numerous tissues.

The protein resides in the mitochondrion matrix. The enzyme catalyses thiosulfate + hydrogen cyanide = thiocyanate + sulfite + 2 H(+). Functionally, together with MRPL18, acts as a mitochondrial import factor for the cytosolic 5S rRNA. Only the nascent unfolded cytoplasmic form is able to bind to the 5S rRNA. Formation of iron-sulfur complexes and cyanide detoxification. Binds molecular oxygen and sulfur. The protein is Thiosulfate sulfurtransferase (TST) of Bos taurus (Bovine).